A 160-amino-acid chain; its full sequence is Globin CTT-II beta (160 aa).

The signal sequence occupies residues 1-15 (MKFLVLALCIAAAVA). In terms of domain architecture, Globin spans 17-160 (PLSADEASLV…NVFNMMFSYL (144 aa)). Positions 75 and 110 each coordinate heme b.

It belongs to the globin family. As to quaternary structure, homodimer.

This chain is Globin CTT-II beta, found in Chironomus thummi thummi (Midge).